The sequence spans 264 residues: Proteasome subunit beta type-4 (264 aa).

Position 1 is an N-acetylmethionine (M1). Positions 1-45 are excised as a propeptide; sequence MEAFWESRAGHWAGGPAPGQFYRIPATPSGLMDPASAPCEGPITR. Y102 carries the post-translational modification Phosphotyrosine.

Belongs to the peptidase T1B family. As to quaternary structure, the 26S proteasome consists of a 20S proteasome core and two 19S regulatory subunits. The 20S proteasome core is a barrel-shaped complex made of 28 subunits that are arranged in four stacked rings. The two outer rings are each formed by seven alpha subunits, and the two inner rings are formed by seven beta subunits. The proteolytic activity is exerted by three beta-subunits PSMB5, PSMB6 and PSMB7. Forms a ternary complex with SMAD1 and OAZ1 before PSMB4 is incorporated into the 20S proteasome. Interacts with PRPF19. In terms of tissue distribution, detected in liver (at protein level).

The protein resides in the cytoplasm. It is found in the nucleus. In terms of biological role, non-catalytic component of the 20S core proteasome complex involved in the proteolytic degradation of most intracellular proteins. This complex plays numerous essential roles within the cell by associating with different regulatory particles. Associated with two 19S regulatory particles, forms the 26S proteasome and thus participates in the ATP-dependent degradation of ubiquitinated proteins. The 26S proteasome plays a key role in the maintenance of protein homeostasis by removing misfolded or damaged proteins that could impair cellular functions, and by removing proteins whose functions are no longer required. Associated with the PA200 or PA28, the 20S proteasome mediates ubiquitin-independent protein degradation. This type of proteolysis is required in several pathways including spermatogenesis (20S-PA200 complex) or generation of a subset of MHC class I-presented antigenic peptides (20S-PA28 complex). SMAD1/OAZ1/PSMB4 complex mediates the degradation of the CREBBP/EP300 repressor SNIP1. In Mus musculus (Mouse), this protein is Proteasome subunit beta type-4 (Psmb4).